The chain runs to 109 residues: Translation initiation factor IF-1, chloroplastic (109 aa).

One can recognise an S1-like domain in the interval 18 to 93 (KSLNQEKENL…TRGRIIYRLK (76 aa)).

Belongs to the IF-1 family. Component of the 30S ribosomal translation pre-initiation complex which assembles on the 30S ribosome in the order IF-2 and IF-3, IF-1 and N-formylmethionyl-tRNA(fMet); mRNA recruitment can occur at any time during PIC assembly.

Its subcellular location is the plastid. It is found in the chloroplast. Functionally, one of the essential components for the initiation of protein synthesis. Stabilizes the binding of IF-2 and IF-3 on the 30S subunit to which N-formylmethionyl-tRNA(fMet) subsequently binds. Helps modulate mRNA selection, yielding the 30S pre-initiation complex (PIC). Upon addition of the 50S ribosomal subunit IF-1, IF-2 and IF-3 are released leaving the mature 70S translation initiation complex. This Tupiella akineta (Green alga) protein is Translation initiation factor IF-1, chloroplastic.